The sequence spans 465 residues: Glutathione reductase (465 aa).

Positions 16 and 17 each coordinate FAD. A glutathione-binding site is contributed by S16. R23 is a binding site for glutathione. 4 residues coordinate FAD: E42, T49, C50, and K58. A disulfide bridge connects residues C50 and C55. A glutathione-binding site is contributed by Y108. G124 lines the FAD pocket. Residues A187, I190, E193, R210, R216, and G276 each contribute to the NADP(+) site. Residue D318 participates in FAD binding. Position 324 (L324) interacts with NADP(+). T326 is a binding site for FAD. Residue R334 participates in glutathione binding. NADP(+) is bound at residue V357. Residue H454 participates in FAD binding. The active-site Proton acceptor is H454.

It belongs to the class-I pyridine nucleotide-disulfide oxidoreductase family. FAD is required as a cofactor.

It is found in the cytoplasm. It carries out the reaction 2 glutathione + NADP(+) = glutathione disulfide + NADPH + H(+). In terms of biological role, catalyzes the reduction of glutathione disulfide (GSSG) to reduced glutathione (GSH). Constitutes the major mechanism to maintain a high GSH:GSSG ratio in the cytosol. The amount of GSH may affect the determination of cell fate. The protein is Glutathione reductase (gsr) of Dictyostelium discoideum (Social amoeba).